The sequence spans 421 residues: Myb-related protein Pp2 (421 aa).

HTH myb-type domains lie at K9–L61 and R62–L116. 2 consecutive DNA-binding regions (H-T-H motif) follow at residues W37–L61 and W89–L112. The interval Q119–R240 is disordered. The span at D136 to D147 shows a compositional bias: acidic residues.

Its subcellular location is the nucleus. In terms of biological role, possible transcription activator. This Physcomitrium patens (Spreading-leaved earth moss) protein is Myb-related protein Pp2 (PP2).